The following is a 374-amino-acid chain: Ribosomal RNA large subunit methyltransferase G (374 aa).

Belongs to the methyltransferase superfamily. RlmG family.

The protein resides in the cytoplasm. The catalysed reaction is guanosine(1835) in 23S rRNA + S-adenosyl-L-methionine = N(2)-methylguanosine(1835) in 23S rRNA + S-adenosyl-L-homocysteine + H(+). Specifically methylates the guanine in position 1835 (m2G1835) of 23S rRNA. This chain is Ribosomal RNA large subunit methyltransferase G, found in Pseudomonas entomophila (strain L48).